The primary structure comprises 261 residues: Protein phosphatase inhibitor 2 (261 aa).

Basic and acidic residues predominate over residues 1–16; sequence MNKDEEFLEEHHYKDD. Positions 1 to 150 are required for binding to pppB; the sequence is MNKDEEFLEE…TPYHYYESEE (150 aa). The segment at 1–261 is disordered; it reads MNKDEEFLEE…LNANLSDDEQ (261 aa). Residues 17 to 60 are compositionally biased toward acidic residues; sequence DAIEGEEEQGEEEESDLDDDMYNIDGETNDDDDDDEAEDEESSE. Positions 123–134 are enriched in polar residues; it reads LTINDMNKSSTM. Positions 150 to 242 form a coiled coil; that stretch reads EETDESKKYL…KKFDNLRKAH (93 aa). Over residues 154–163 the composition is skewed to basic and acidic residues; sequence ESKKYLENKF. A compositionally biased stretch (basic residues) spans 195-206; the sequence is DKKKKKKNLKIH. The segment covering 212 to 225 has biased composition (acidic residues); the sequence is DDNDDNEDEDEDET. A compositionally biased stretch (basic and acidic residues) spans 226-250; sequence EEKKENKKKFDNLRKAHYNEFKVVR.

It belongs to the protein phosphatase inhibitor 2 family. In terms of assembly, interacts with pppB.

Functionally, inhibitor of protein-phosphatase 1 (PP1). The protein is Protein phosphatase inhibitor 2 (dpiA) of Dictyostelium discoideum (Social amoeba).